Here is a 278-residue protein sequence, read N- to C-terminus: uncharacterized protein (278 aa).

This is an uncharacterized protein from Schizosaccharomyces pombe (strain 972 / ATCC 24843) (Fission yeast).